Consider the following 196-residue polypeptide: Secreted phosphoprotein 24 (196 aa).

The N-terminal stretch at 1-19 (MKWCGVLMVALLQSLCCSG) is a signal peptide. Disulfide bonds link C83/C94 and C107/C125. Residues 125 to 196 (CGQDSSSSES…RGDSFGNHLE (72 aa)) are disordered. Low complexity predominate over residues 129–138 (SSSSESSSEE).

This sequence belongs to the SPP2 family. In terms of processing, multiply phosphorylated at serine residues.

The protein resides in the secreted. Its function is as follows. Could coordinate an aspect of bone turnover. In Salmo salar (Atlantic salmon), this protein is Secreted phosphoprotein 24 (spp2).